The chain runs to 196 residues: Imidazoleglycerol-phosphate dehydratase (196 aa).

Belongs to the imidazoleglycerol-phosphate dehydratase family.

It is found in the cytoplasm. The catalysed reaction is D-erythro-1-(imidazol-4-yl)glycerol 3-phosphate = 3-(imidazol-4-yl)-2-oxopropyl phosphate + H2O. It participates in amino-acid biosynthesis; L-histidine biosynthesis; L-histidine from 5-phospho-alpha-D-ribose 1-diphosphate: step 6/9. The chain is Imidazoleglycerol-phosphate dehydratase from Nitratidesulfovibrio vulgaris (strain DSM 19637 / Miyazaki F) (Desulfovibrio vulgaris).